A 528-amino-acid polypeptide reads, in one-letter code: Adhesion G-protein coupled receptor G5 (528 aa).

An N-terminal signal peptide occupies residues 1–21 (MDHCGALFLCLCLLTLQNATT). Topologically, residues 22-245 (ETWEELLSYM…SPALVPAELL (224 aa)) are extracellular. 6 N-linked (GlcNAc...) asparagine glycosylation sites follow: asparagine 58, asparagine 65, asparagine 146, asparagine 147, asparagine 173, and asparagine 179. The 162-residue stretch at 78–239 (FKLSCDFSGL…AVLMQLSPAL (162 aa)) folds into the GAIN-B domain. 2 disulfide bridges follow: cysteine 189/cysteine 221 and cysteine 209/cysteine 223. The interval 189-239 (CVFWKEGARKQPWGGWSPEGCRTEQPSHSQVLCRCNHLTYFAVLMQLSPAL) is GPS. The stachel stretch occupies residues 228-236 (YFAVLMQLS). A helical membrane pass occupies residues 246 to 271 (APLTYISLVGCSISIVASLITVLLHF). The Cytoplasmic portion of the chain corresponds to 272–280 (HFRKQSDSL). The chain crosses the membrane as a helical span at residues 281-304 (TRIHMNLHASVLLLNIAFLLSPAF). The Extracellular segment spans residues 305–314 (AMSPVPGSAC). Residues cysteine 314 and cysteine 404 are joined by a disulfide bond. The helical transmembrane segment at 315-340 (TALAAALHYALLSCLTWMAIEGFNLY) threads the bilayer. The Cytoplasmic portion of the chain corresponds to 341-353 (LLLGRVYNIYIRR). A helical membrane pass occupies residues 354-377 (YVFKLGVLGWGAPALLVLLSLSVK). Residues 378 to 410 (SSVYGPCTIPVFDSWENGTGFQNMSICWVRSPV) are Extracellular-facing. Asparagine 394 and asparagine 400 each carry an N-linked (GlcNAc...) asparagine glycan. Residues 411–435 (VHSVLVMGYGGLTSLFNLVVLAWAL) traverse the membrane as a helical segment. The Cytoplasmic segment spans residues 436 to 455 (WTLRRLRERADAPSVRACHD). A helical transmembrane segment spans residues 456–477 (TVTVLGLTVLLGTTWALAFFSF). The Extracellular portion of the chain corresponds to 478–481 (GVFL). A helical membrane pass occupies residues 482–505 (LPQLFLFTILNSLYGFFLFLWFCS). Residues 506 to 528 (QRCRSEAEAKAQIEAFSSSQTTQ) lie on the Cytoplasmic side of the membrane.

The protein belongs to the G-protein coupled receptor 2 family. Adhesion G-protein coupled receptor (ADGR) subfamily. Heterodimer of 2 chains generated by proteolytic processing; the large extracellular N-terminal fragment and the membrane-bound C-terminal fragment predominantly remain associated and non-covalently linked. In terms of processing, autoproteolytically processed at the GPS region of the GAIN-B domain; this cleavage modulates receptor activity. Post-translationally, N-glycsylated. Expressed in immune cells. Primarily found in granulocytes. Found in eosinophils.

Its subcellular location is the cell membrane. With respect to regulation, forms a heterodimer of 2 chains generated by proteolytic processing that remain associated through non-covalent interactions mediated by the GAIN-B domain. In the inactivated receptor, the Stachel sequence (also named stalk) is embedded in the GAIN-B domain, where it adopts a beta-strand conformation. On activation, the Stachel moves into the 7 transmembrane region and adopts a twisted hook-shaped configuration that forms contacts within the receptor, leading to coupling of a G-alpha protein, which activates signaling. The cleaved GAIN-B and N-terminal domains can then dissociate from the rest of the receptor. Its function is as follows. Orphan adhesion G-protein coupled receptor (aGPCR). Ligand binding causes a conformation change that triggers signaling via guanine nucleotide-binding proteins (G proteins) and modulates the activity of downstream effectors, such as adenylate cyclase. ADGRG5 is specifically coupled to G(s) G proteins and mediates activation of adenylate cyclase activity. This is Adhesion G-protein coupled receptor G5 from Homo sapiens (Human).